A 262-amino-acid chain; its full sequence is (2Z,6E)-farnesyl diphosphate synthase (262 aa).

Asp-40 is a catalytic residue. Asp-40 is a binding site for Mg(2+). Residues 41–44 (GNRR), Trp-45, and 86–88 (STE) contribute to the substrate site. Asn-89 functions as the Proton acceptor in the catalytic mechanism. Substrate is bound by residues Arg-92, Arg-211, and 217–219 (RLS). Glu-230 is a Mg(2+) binding site.

Belongs to the UPP synthase family. Z-FPP synthase subfamily. Homodimer. Mg(2+) serves as cofactor.

It is found in the cytoplasm. It localises to the cell membrane. It carries out the reaction isopentenyl diphosphate + (2E)-geranyl diphosphate = (2Z,6E)-farnesyl diphosphate + diphosphate. Catalyzes the condensation of only one isopentenyl pyrophosphate (IPP) unit in the cis configuration to E-geranyl diphosphate (E-GPP) generating the 15 carbon product (2Z,6E)-farnesyl diphosphate (Z-FPP or EZ-FPP). Z-FPP is the precursor of decaprenyl diphosphate, which has a central role in the biosynthesis of the mycobacterial cell wall. In Mycobacterium tuberculosis (strain CDC 1551 / Oshkosh), this protein is (2Z,6E)-farnesyl diphosphate synthase.